Reading from the N-terminus, the 805-residue chain is Ubiquitin carboxyl-terminal hydrolase 10-B (805 aa).

2 disordered regions span residues 136-173 (AIPDGSGNADSDGTSGTGQRERKKKKKRPPGYYSYLEG) and 284-305 (DTTENLGVTNGQTLESPEEDTV). 2 stretches are compositionally biased toward polar residues: residues 143–153 (NADSDGTSGTG) and 284–298 (DTTENLGVTNGQTLE). In terms of domain architecture, USP spans 422–802 (RGLINKGNWC…TAYLLYYRRV (381 aa)). The active-site Nucleophile is C431. The segment at 573 to 600 (EEVNKEEQEGSDEEWEQVGPRNKSSVTR) is disordered. The active-site Proton acceptor is H756.

It belongs to the peptidase C19 family. USP10 subfamily.

The protein localises to the cytoplasm. It localises to the nucleus. The catalysed reaction is Thiol-dependent hydrolysis of ester, thioester, amide, peptide and isopeptide bonds formed by the C-terminal Gly of ubiquitin (a 76-residue protein attached to proteins as an intracellular targeting signal).. In terms of biological role, hydrolase that can remove conjugated ubiquitin from target proteins such as p53/tp53, rps2/us5, rps3/us3, rps10/eS10, becn1, snx3 and cftr. Acts as an essential regulator of p53/tp53 stability: in unstressed cells, specifically deubiquitinates p53/tp53 in the cytoplasm, leading to counteracts MDM2 action and stabilize p53/tp53. Following DNA damage, translocates to the nucleus and deubiquitinates p53/tp53, leading to regulate the p53/TP53-dependent DNA damage response. Component of a regulatory loop that controls autophagy and p53/tp53 levels. Plays a key role in 40S ribosome subunit recycling when a ribosome has stalled during translation: acts both by inhibiting formation of stress granules, which store stalled translation pre-initiation complexes, and mediating deubiquitination of 40S ribosome subunits. Deubiquitinates cftr in early endosomes, enhancing its endocytic recycling. This is Ubiquitin carboxyl-terminal hydrolase 10-B (usp10-b) from Xenopus laevis (African clawed frog).